We begin with the raw amino-acid sequence, 161 residues long: Phosphopantetheine adenylyltransferase (161 aa).

Serine 10 contacts substrate. ATP contacts are provided by residues 10–11 and histidine 18; that span reads SF. Substrate-binding residues include lysine 42, alanine 75, and arginine 89. ATP-binding positions include 90–92, glutamate 100, and 125–131; these read GLR and LSPISSS.

It belongs to the bacterial CoaD family. In terms of assembly, homohexamer. Mg(2+) serves as cofactor.

The protein resides in the cytoplasm. It catalyses the reaction (R)-4'-phosphopantetheine + ATP + H(+) = 3'-dephospho-CoA + diphosphate. It participates in cofactor biosynthesis; coenzyme A biosynthesis; CoA from (R)-pantothenate: step 4/5. Reversibly transfers an adenylyl group from ATP to 4'-phosphopantetheine, yielding dephospho-CoA (dPCoA) and pyrophosphate. The polypeptide is Phosphopantetheine adenylyltransferase (Streptococcus agalactiae serotype Ia (strain ATCC 27591 / A909 / CDC SS700)).